A 209-amino-acid polypeptide reads, in one-letter code: NADH-quinone oxidoreductase subunit C (209 aa).

Belongs to the complex I 30 kDa subunit family. As to quaternary structure, NDH-1 is composed of 14 different subunits. Subunits NuoB, C, D, E, F, and G constitute the peripheral sector of the complex.

The protein localises to the cell inner membrane. It carries out the reaction a quinone + NADH + 5 H(+)(in) = a quinol + NAD(+) + 4 H(+)(out). Its function is as follows. NDH-1 shuttles electrons from NADH, via FMN and iron-sulfur (Fe-S) centers, to quinones in the respiratory chain. The immediate electron acceptor for the enzyme in this species is believed to be ubiquinone. Couples the redox reaction to proton translocation (for every two electrons transferred, four hydrogen ions are translocated across the cytoplasmic membrane), and thus conserves the redox energy in a proton gradient. The polypeptide is NADH-quinone oxidoreductase subunit C (Xanthobacter autotrophicus (strain ATCC BAA-1158 / Py2)).